The primary structure comprises 393 residues: S-adenosylmethionine synthase (393 aa).

His17 lines the ATP pocket. Asp19 provides a ligand contact to Mg(2+). Glu45 provides a ligand contact to K(+). L-methionine is bound by residues Glu58 and Gln106. Residues 106-116 (QSAHIAQGVDA) are flexible loop. ATP contacts are provided by residues 171–173 (DAK), 237–238 (KF), Asp246, 252–253 (RK), Ala269, and Lys273. Position 246 (Asp246) interacts with L-methionine. Lys277 is a binding site for L-methionine.

It belongs to the AdoMet synthase family. Homotetramer; dimer of dimers. The cofactor is Mg(2+). K(+) serves as cofactor.

The protein resides in the cytoplasm. The catalysed reaction is L-methionine + ATP + H2O = S-adenosyl-L-methionine + phosphate + diphosphate. The protein operates within amino-acid biosynthesis; S-adenosyl-L-methionine biosynthesis; S-adenosyl-L-methionine from L-methionine: step 1/1. Functionally, catalyzes the formation of S-adenosylmethionine (AdoMet) from methionine and ATP. The overall synthetic reaction is composed of two sequential steps, AdoMet formation and the subsequent tripolyphosphate hydrolysis which occurs prior to release of AdoMet from the enzyme. In Ruegeria sp. (strain TM1040) (Silicibacter sp.), this protein is S-adenosylmethionine synthase.